A 653-amino-acid chain; its full sequence is Sodium-dependent nutrient amino acid transporter 1 (653 aa).

Residues 1–55 form a disordered region; it reads MELKGVHQQNGTSNGTGAAGTEGESPPPAPAPATAEAAASLETTTEKVDAEQQKT. The Cytoplasmic segment spans residues 1-59; that stretch reads MELKGVHQQNGTSNGTGAAGTEGESPPPAPAPATAEAAASLETTTEKVDAEQQKTERTN. 2 stretches are compositionally biased toward low complexity: residues 10–24 and 32–43; these read NGTS…TEGE and PATAEAAASLET. Residues 44–55 are compositionally biased toward basic and acidic residues; sequence TTEKVDAEQQKT. The next 4 helical transmembrane spans lie at 60 to 80, 93 to 113, 125 to 145, and 146 to 166; these read WGNG…LGNV, GAFL…MYYL, TVKI…QAFA, and TICI…YLFV. Residues N202 and N205 are each glycosylated (N-linked (GlcNAc...) asparagine). 9 helical membrane passes run 241 to 261, 270 to 290, 319 to 339, 353 to 373, 413 to 433, 459 to 479, 486 to 506, 528 to 548, and 565 to 585; these read PDWK…LVIM, AAYF…VRAV, AVVQ…MFAS, IVTT…FAIL, LFSV…IVAL, ICGF…ILTL, TYVV…IYGM, CWSF…MVTI, and AGWL…MWYI.

This sequence belongs to the sodium:neurotransmitter symporter (SNF) (TC 2.A.22) family.

The protein resides in the membrane. In terms of biological role, unusual broad substrate spectrum amino acid:sodium cotransporter that promotes absorption of the D isomers of essential amino acids. Neutral amino acids are the preferred substrates, especially methionine and phenylalanine. This is Sodium-dependent nutrient amino acid transporter 1 from Drosophila pseudoobscura pseudoobscura (Fruit fly).